A 376-amino-acid polypeptide reads, in one-letter code: Copper-containing nitrite reductase (376 aa).

Positions 1-33 form a signal peptide, tat-type signal; sequence MAEQMQISRRTILAGAALAGALAPVLATTSAWG. Q34 is modified (pyrrolidone carboxylic acid). 2 Plastocyanin-like domains span residues 34–211 and 212–376; these read QGAV…YDKI and YYVG…PSGT. Residues H131, H136, H171, C172, H181, M186, and H342 each coordinate Cu cation.

This sequence belongs to the multicopper oxidase family. As to quaternary structure, homotrimer. Cu(2+) serves as cofactor. Requires Cu(+) as cofactor. The cofactor is FAD. Post-translationally, predicted to be exported by the Tat system. The position of the signal peptide cleavage has been experimentally proven.

Its subcellular location is the periplasm. It catalyses the reaction nitric oxide + Fe(III)-[cytochrome c] + H2O = Fe(II)-[cytochrome c] + nitrite + 2 H(+). It participates in nitrogen metabolism; nitrate reduction (denitrification); dinitrogen from nitrate: step 2/4. This Alcaligenes faecalis protein is Copper-containing nitrite reductase (nirK).